The chain runs to 396 residues: Diels-Alderase mpsD (396 aa).

It belongs to the Diels-Alderase family.

It functions in the pathway secondary metabolite biosynthesis. In terms of biological role, diels-Alderase; part of the gene cluster that mediates the biosynthesis of macrophasetins, 3-decalinoyltetramic acids (DTAs) which feature a tetramate (pyrrolidine-2,4-dione) unit connected to a decalin fragment and that have potent bioactivities. The PKS-NRPS mpsA together with its associated enoylreductase partner mpsG incorporate one unit of acetyl-CoA, seven units of malonyl-CoA, and one unit of L-alanine to assemble the linear tetramic acid intermediate corresponding to the backbone of macrophasetins. Without the Diels-Alderase mpsD, the mpsA/G product can undergo the non-enzymatic intramolecular Diels-Alder (IMDA) reaction to generate both macrophasetin A and macrophasetin B. Catalyzed by mpsD, the linear tetramic acid intermediate is thoroughly converted to macrophasetin A via the endo-IMDA reaction in a regioselective and stereoselective manner. Finally, the cytochrome P450 monooxygenase mpsF catalyzes the hydroxylation at C20 to yield the end product macrophasetin C. The protein is Diels-Alderase mpsD of Macrophomina phaseolina (strain MS6) (Charcoal rot fungus).